The chain runs to 461 residues: Phosphomethylpyrimidine synthase (461 aa).

Substrate-binding positions include asparagine 80, methionine 109, tyrosine 138, histidine 173, 193 to 195, 234 to 237, and glutamate 273; these read SRG and DGLR. Histidine 277 contacts Zn(2+). A substrate-binding site is contributed by tyrosine 300. Histidine 341 provides a ligand contact to Zn(2+). Cysteine 421, cysteine 424, and cysteine 429 together coordinate [4Fe-4S] cluster.

The protein belongs to the ThiC family. The cofactor is [4Fe-4S] cluster.

The catalysed reaction is 5-amino-1-(5-phospho-beta-D-ribosyl)imidazole + S-adenosyl-L-methionine = 4-amino-2-methyl-5-(phosphooxymethyl)pyrimidine + CO + 5'-deoxyadenosine + formate + L-methionine + 3 H(+). It participates in cofactor biosynthesis; thiamine diphosphate biosynthesis. Functionally, catalyzes the synthesis of the hydroxymethylpyrimidine phosphate (HMP-P) moiety of thiamine from aminoimidazole ribotide (AIR) in a radical S-adenosyl-L-methionine (SAM)-dependent reaction. This is Phosphomethylpyrimidine synthase from Solibacter usitatus (strain Ellin6076).